The primary structure comprises 467 residues: E3 ubiquitin-protein ligase IE61 (467 aa).

The RING-type zinc finger occupies 19-58 (CTICMSTVSDLGKTMPCLHDFCFVCIRAWTSTSVQCPLCR). 4 disordered regions span residues 101–171 (GDVI…GVTK), 205–238 (QQPR…FRAT), 344–364 (IVRP…RDTR), and 413–467 (DSAC…MKKS). The span at 116 to 143 (ESIQQPTSRSSREPIQSPNPGPLQSSAR) shows a compositional bias: polar residues. Residues 149–161 (SPSDSQQDSIQPP) are compositionally biased toward low complexity. Polar residues predominate over residues 162-171 (TRDSSPGVTK). A compositionally biased stretch (basic and acidic residues) spans 228–238 (RTMDRLPFRAT). Composition is skewed to low complexity over residues 429–443 (GESN…TSGS) and 450–459 (KSSAGKAGKG).

In terms of assembly, interacts with host BTRC; this interaction seems to inactivate SCF-mediated protein degradation in general. In terms of processing, auto-ubiquitinated.

The enzyme catalyses S-ubiquitinyl-[E2 ubiquitin-conjugating enzyme]-L-cysteine + [acceptor protein]-L-lysine = [E2 ubiquitin-conjugating enzyme]-L-cysteine + N(6)-ubiquitinyl-[acceptor protein]-L-lysine.. RING-finger E3 ubiquitin ligase that degrades host SP100, one of the major components of ND10 nuclear bodies, thereby disrupting the organization of these bodies. Also plays a role in the inhibition of host NF-kappa-B pathway by blocking the SCF(BTRC)-mediated addition of ubiquitin chains to host I-kappa-B-alpha/NFKBIA, thereby interfering with its degradation. In Varicella-zoster virus (strain Dumas) (HHV-3), this protein is E3 ubiquitin-protein ligase IE61 (61).